Consider the following 261-residue polypeptide: Intermembrane phospholipid transport system permease protein MlaE (261 aa).

The Cytoplasmic segment spans residues 1–12; sequence MIVNFISALGKQ. The helical transmembrane segment at 13-33 threads the bilayer; it reads VIDFFRALGRAGFMLFGALIG. Topologically, residues 34-49 are periplasmic; the sequence is KPQIRKHFPLLVKQMH. The helical transmembrane segment at 50-70 threads the bilayer; the sequence is VLGVQSLLIILLSGLFIGMVL. Over 71–147 the chain is Cytoplasmic; it reads GLQGYVVLID…DPLRRVIAPR (77 aa). A helical transmembrane segment spans residues 148-168; the sequence is FWAGVISMPVLSILFIAIGIW. The Periplasmic segment spans residues 169–198; that stretch reads GGSLVGVDWKGVDSGSFWSVMQNSVSWSYD. Residues 199–219 traverse the membrane as a helical segment; it reads ILNGFIKAVFFAVAVTWIALF. The Cytoplasmic portion of the chain corresponds to 220 to 238; it reads NGYDCMPTSEGISQATTRT. Residues 239–259 traverse the membrane as a helical segment; it reads VVHASLVVLGLDFILTAIMFG. The Periplasmic segment spans residues 260–261; the sequence is AG.

The protein belongs to the MlaE permease family. In terms of assembly, the complex is composed of two ATP-binding proteins (MlaF), two transmembrane proteins (MlaE), two cytoplasmic solute-binding proteins (MlaB) and six periplasmic solute-binding proteins (MlaD).

The protein localises to the cell inner membrane. Part of the ABC transporter complex MlaFEDB, which is involved in a phospholipid transport pathway that maintains lipid asymmetry in the outer membrane by retrograde trafficking of phospholipids from the outer membrane to the inner membrane. Probably responsible for the translocation of the substrate across the membrane. The sequence is that of Intermembrane phospholipid transport system permease protein MlaE from Haemophilus influenzae (strain ATCC 51907 / DSM 11121 / KW20 / Rd).